The following is a 522-amino-acid chain: Protein disulfide-isomerase (522 aa).

The segment at residues 1–28 (MKFSAGAVLSWSSLLLASSVFAQQEAVA) is a signal peptide (or 22). In terms of domain architecture, Thioredoxin 1 spans 29–141 (PEDSAVVKLA…VQFMIKQSQP (113 aa)). Residues Cys-61 and Cys-64 each act as nucleophile in the active site. Cysteines 61 and 64 form a disulfide. Residues Asn-82, Asn-117, Asn-155, and Asn-174 are each glycosylated (N-linked (GlcNAc...) asparagine). A Thioredoxin 2 domain is found at 356–485 (FLKGDASPIV…LFDFIKENGH (130 aa)). Catalysis depends on nucleophile residues Cys-406 and Cys-409. An intrachain disulfide couples Cys-406 to Cys-409. A glycan (N-linked (GlcNAc...) asparagine) is linked at Asn-425. The disordered stretch occupies residues 497–522 (AQEKAAEEADADAELADEEDAIHDEL). Positions 504–522 (EADADAELADEEDAIHDEL) are enriched in acidic residues. The Prevents secretion from ER signature appears at 519–522 (HDEL).

The protein belongs to the protein disulfide isomerase family. In terms of assembly, interacts with EPS1, KAR2 and MNL1. In terms of processing, the N-terminus is blocked.

It localises to the endoplasmic reticulum lumen. It carries out the reaction Catalyzes the rearrangement of -S-S- bonds in proteins.. Its function is as follows. Protein disulfide isomerase of ER lumen required for formation of disulfide bonds in secretory and cell-surface proteins and which unscrambles non-native disulfide bonds. Forms a complex with MNL1 to process unfolded protein-bound Man8GlcNAc2 oligosaccharides to Man7GlcNAc2, promoting degradation in unfolded protein response. This Saccharomyces cerevisiae (strain ATCC 204508 / S288c) (Baker's yeast) protein is Protein disulfide-isomerase (PDI1).